A 245-amino-acid polypeptide reads, in one-letter code: uncharacterized protein (245 aa).

A coiled-coil region spans residues 33 to 176 (QRAAYQQVQA…SSQRDMLTAT (144 aa)).

This is an uncharacterized protein from Mycobacterium tuberculosis (strain CDC 1551 / Oshkosh).